The primary structure comprises 167 residues: Ubiquitin-conjugating enzyme E2 14 (167 aa).

Ala-2 carries the N-acetylalanine modification. The UBC core domain occupies 5 to 165 (QASLLLQKQL…VSRCVRRSQE (161 aa)). Residue Cys-90 is the Glycyl thioester intermediate of the active site.

This sequence belongs to the ubiquitin-conjugating enzyme family.

The catalysed reaction is S-ubiquitinyl-[E1 ubiquitin-activating enzyme]-L-cysteine + [E2 ubiquitin-conjugating enzyme]-L-cysteine = [E1 ubiquitin-activating enzyme]-L-cysteine + S-ubiquitinyl-[E2 ubiquitin-conjugating enzyme]-L-cysteine.. The protein operates within protein modification; protein ubiquitination. In terms of biological role, accepts the ubiquitin from the E1 complex and catalyzes its covalent attachment to other proteins. Involved in the formation of multiubiquitin chains. Signal the protein for selective degradation. The chain is Ubiquitin-conjugating enzyme E2 14 (UBC14) from Arabidopsis thaliana (Mouse-ear cress).